Here is a 130-residue protein sequence, read N- to C-terminus: MARVIRKKPFVRRRPCQFCLKRQAVTYIDYKNEAELVRLVNMQGKILSSRITGTCARHQRAVALAIKRARYMAILPYIGLIKKDRDEIAQDQQKVEVKKMEESVKSAEPKATAEATEESKPKRTRKAKTE.

Composition is skewed to basic and acidic residues over residues 98 to 108 (KKMEESVKSAE) and 117 to 130 (EESK…AKTE). Positions 98-130 (KKMEESVKSAEPKATAEATEESKPKRTRKAKTE) are disordered.

The protein belongs to the bacterial ribosomal protein bS18 family. Part of the 30S ribosomal subunit. Forms a tight heterodimer with protein bS6.

Functionally, binds as a heterodimer with protein bS6 to the central domain of the 16S rRNA, where it helps stabilize the platform of the 30S subunit. The sequence is that of Small ribosomal subunit protein bS18 from Metamycoplasma arthritidis (strain 158L3-1) (Mycoplasma arthritidis).